The sequence spans 325 residues: Tetraacyldisaccharide 4'-kinase (325 aa).

Threonine 55–threonine 62 provides a ligand contact to ATP.

It belongs to the LpxK family.

The enzyme catalyses a lipid A disaccharide + ATP = a lipid IVA + ADP + H(+). The protein operates within glycolipid biosynthesis; lipid IV(A) biosynthesis; lipid IV(A) from (3R)-3-hydroxytetradecanoyl-[acyl-carrier-protein] and UDP-N-acetyl-alpha-D-glucosamine: step 6/6. Transfers the gamma-phosphate of ATP to the 4'-position of a tetraacyldisaccharide 1-phosphate intermediate (termed DS-1-P) to form tetraacyldisaccharide 1,4'-bis-phosphate (lipid IVA). This Salmonella enteritidis PT4 (strain P125109) protein is Tetraacyldisaccharide 4'-kinase.